A 192-amino-acid chain; its full sequence is Pterin-4-alpha-carbinolamine dehydratase (192 aa).

This sequence belongs to the pterin-4-alpha-carbinolamine dehydratase family.

It catalyses the reaction (4aS,6R)-4a-hydroxy-L-erythro-5,6,7,8-tetrahydrobiopterin = (6R)-L-erythro-6,7-dihydrobiopterin + H2O. The protein is Pterin-4-alpha-carbinolamine dehydratase (Pcd) of Drosophila melanogaster (Fruit fly).